Consider the following 420-residue polypeptide: Gamma-glutamyl phosphate reductase (420 aa).

This sequence belongs to the gamma-glutamyl phosphate reductase family.

Its subcellular location is the cytoplasm. The catalysed reaction is L-glutamate 5-semialdehyde + phosphate + NADP(+) = L-glutamyl 5-phosphate + NADPH + H(+). It participates in amino-acid biosynthesis; L-proline biosynthesis; L-glutamate 5-semialdehyde from L-glutamate: step 2/2. Catalyzes the NADPH-dependent reduction of L-glutamate 5-phosphate into L-glutamate 5-semialdehyde and phosphate. The product spontaneously undergoes cyclization to form 1-pyrroline-5-carboxylate. This chain is Gamma-glutamyl phosphate reductase, found in Neisseria gonorrhoeae (strain ATCC 700825 / FA 1090).